The following is a 309-amino-acid chain: Methionyl-tRNA formyltransferase (309 aa).

A (6S)-5,6,7,8-tetrahydrofolate-binding site is contributed by 107-110 (SLLP).

Belongs to the Fmt family.

It carries out the reaction L-methionyl-tRNA(fMet) + (6R)-10-formyltetrahydrofolate = N-formyl-L-methionyl-tRNA(fMet) + (6S)-5,6,7,8-tetrahydrofolate + H(+). Attaches a formyl group to the free amino group of methionyl-tRNA(fMet). The formyl group appears to play a dual role in the initiator identity of N-formylmethionyl-tRNA by promoting its recognition by IF2 and preventing the misappropriation of this tRNA by the elongation apparatus. The polypeptide is Methionyl-tRNA formyltransferase (Borrelia recurrentis (strain A1)).